Reading from the N-terminus, the 335-residue chain is Adenosine deaminase (335 aa).

Positions 12 and 14 each coordinate Zn(2+). Residues His14 and Asp16 each coordinate substrate. Residue His197 coordinates Zn(2+). Glu200 functions as the Proton donor in the catalytic mechanism. Asp278 is a binding site for Zn(2+).

This sequence belongs to the metallo-dependent hydrolases superfamily. Adenosine and AMP deaminases family. Adenosine deaminase subfamily. It depends on Zn(2+) as a cofactor.

The catalysed reaction is adenosine + H2O + H(+) = inosine + NH4(+). It carries out the reaction 2'-deoxyadenosine + H2O + H(+) = 2'-deoxyinosine + NH4(+). Functionally, catalyzes the hydrolytic deamination of adenosine and 2-deoxyadenosine. This chain is Adenosine deaminase, found in Clostridium botulinum (strain Loch Maree / Type A3).